The following is a 202-amino-acid chain: Prostamide/prostaglandin F synthase (202 aa).

Tyr108 is subject to Phosphotyrosine.

The protein belongs to the peroxiredoxin-like PRXL2 family. Prostamide/prostaglandin F synthase subfamily.

It is found in the cytoplasm. The protein localises to the cytosol. The enzyme catalyses prostaglandin H2 + [thioredoxin]-dithiol = prostaglandin F2alpha + [thioredoxin]-disulfide. The catalysed reaction is prostamide F2alpha + [thioredoxin]-disulfide = prostamide H2 + [thioredoxin]-dithiol. Its function is as follows. Catalyzes the reduction of prostaglandin-ethanolamide H(2) (prostamide H(2)) to prostamide F(2alpha) with NADPH as proton donor. Also able to reduce prostaglandin H(2) to prostaglandin F(2alpha). This is Prostamide/prostaglandin F synthase (PRXL2B) from Sus scrofa (Pig).